The primary structure comprises 343 residues: Cysteine proteinase 1 (343 aa).

Positions 1 to 18 are cleaved as a signal peptide; the sequence is MKVILLFVLAVFTVFVSS. A propeptide spans 19–117 (activation peptide); the sequence is RGIPLEEQSQ…DYLDDEFINS (99 aa). 3 disulfide bridges follow: cysteine 139-cysteine 190, cysteine 173-cysteine 224, and cysteine 279-cysteine 332. Cysteine 142 is a catalytic residue. Active-site residues include histidine 286 and asparagine 311.

It belongs to the peptidase C1 family. In terms of processing, phosphoglycosylated, contains GlcNAc-alpha-1-P-Ser residues.

The protein resides in the lysosome. Functionally, cysteine proteinases 1 and 2 are believed to participate in the breakdown of protein during differentiation of Dictyostelium as a response to starvation. The protein is Cysteine proteinase 1 (cprA) of Dictyostelium discoideum (Social amoeba).